The following is a 123-amino-acid chain: Beta-defensin 126 (123 aa).

An N-terminal signal peptide occupies residues 1–20; sequence MKSLLFTLAVFMLLAQLVSG. Residues 21-63 are in vitro binds to LPS, mediates antimicrobial activity and inhibits LPS-mediated inflammation; that stretch reads NLYVKRCLNDIGICKKTCKPEEVRSEHGWVMCGKRKACCVPAD. 3 disulfides stabilise this stretch: Cys27–Cys58, Cys34–Cys52, and Cys38–Cys59.

This sequence belongs to the beta-defensin family. As to quaternary structure, homodimer or homooligomer; disulfide-linked. In terms of processing, O-glycosylated; glycans contain sialic acids alpha(2,3)-linked to galactose and N-acetylgalactosamine. The C-terminal O-glycosylation contributes substantially to the sperm glyocalyx. In terms of tissue distribution, high-level and epididymis-specific expression. Detected in epithelial cells lining the efferent ductules, initial segment, and cauda regions of the epididymis, but not on spermatozoa.

Its subcellular location is the secreted. Highly glycosylated atypical beta-defensin involved in several aspects of sperm function. Facilitates sperm transport in the female reproductive tract and contributes to sperm protection against immunodetection; both functions are probably implicating the negative surface charge provided by its O-linked oligosaccharides in the sperm glycocalyx. Involved in binding of sperm to oviductal epithelial cells to form a sperm reservoir until ovulation. Release from the sperm surface during capacitation and ovaluation by an elevation of oviductal fluid pH is unmasking other surface components and allows sperm to penetrate the cumulus matrix and bind to the zona pellucida of the oocyte. In vitro has antimicrobial activity and may inhibit LPS-mediated inflammation. The sequence is that of Beta-defensin 126 (DEFB126) from Macaca fascicularis (Crab-eating macaque).